Consider the following 164-residue polypeptide: Peptide deformylase (164 aa).

Positions 87 and 129 each coordinate Fe cation. E130 is an active-site residue. Residue H133 participates in Fe cation binding.

It belongs to the polypeptide deformylase family. Fe(2+) is required as a cofactor.

It catalyses the reaction N-terminal N-formyl-L-methionyl-[peptide] + H2O = N-terminal L-methionyl-[peptide] + formate. Its function is as follows. Removes the formyl group from the N-terminal Met of newly synthesized proteins. Requires at least a dipeptide for an efficient rate of reaction. N-terminal L-methionine is a prerequisite for activity but the enzyme has broad specificity at other positions. The chain is Peptide deformylase from Thermotoga petrophila (strain ATCC BAA-488 / DSM 13995 / JCM 10881 / RKU-1).